The primary structure comprises 606 residues: Mitogen-activated protein kinase 20 (606 aa).

In terms of domain architecture, Protein kinase spans 25–316; sequence FKVQEVIGKG…AEEALADPYF (292 aa). ATP is bound by residues 31–39 and K54; that span reads IGKGSYGVV. Residue D151 is the Proton acceptor of the active site. T187 bears the Phosphothreonine mark. Residues 187–189 carry the TXY motif; the sequence is TDY. Residue Y189 is modified to Phosphotyrosine. Phosphothreonine is present on T192.

Belongs to the protein kinase superfamily. CMGC Ser/Thr protein kinase family. MAP kinase subfamily. Post-translationally, dually phosphorylated on Thr-187 and Tyr-189, which activates the enzyme.

It catalyses the reaction L-seryl-[protein] + ATP = O-phospho-L-seryl-[protein] + ADP + H(+). It carries out the reaction L-threonyl-[protein] + ATP = O-phospho-L-threonyl-[protein] + ADP + H(+). Its activity is regulated as follows. Activated by threonine and tyrosine phosphorylation. In Arabidopsis thaliana (Mouse-ear cress), this protein is Mitogen-activated protein kinase 20 (MPK20).